The primary structure comprises 206 residues: MIDPDGYRPNVGIVLMRQDGQVFWARRVRRDGWQFPQGGMNTDETPVEAMYRELQEETGLLPEHVEVLGATPGWLRYKLPARAIRRNERQVCIGQKQVWFLLRLTGDESHVKLDHTDSPEFDHWRWVDFWYPVEHVVMFKRGVYARALRHLAPLARGVAGQGVTAMPKSAAEAWMPGHTAGHDRPRKRPRTRGYWPKKATGDGPAS.

Residues 6–149 (GYRPNVGIVL…KRGVYARALR (144 aa)) form the Nudix hydrolase domain. Residues 38-59 (GGMNTDETPVEAMYRELQEETG) carry the Nudix box motif. The disordered stretch occupies residues 175–206 (MPGHTAGHDRPRKRPRTRGYWPKKATGDGPAS).

It belongs to the Nudix hydrolase family. RppH subfamily. Requires a divalent metal cation as cofactor.

In terms of biological role, accelerates the degradation of transcripts by removing pyrophosphate from the 5'-end of triphosphorylated RNA, leading to a more labile monophosphorylated state that can stimulate subsequent ribonuclease cleavage. This is RNA pyrophosphohydrolase from Stenotrophomonas maltophilia (strain K279a).